Here is a 124-residue protein sequence, read N- to C-terminus: Large ribosomal subunit protein uL29 (124 aa).

The protein belongs to the universal ribosomal protein uL29 family.

The polypeptide is Large ribosomal subunit protein uL29 (RPL35) (Tetrahymena thermophila (strain SB210)).